The following is a 280-amino-acid chain: 4-diphosphocytidyl-2-C-methyl-D-erythritol kinase (280 aa).

Lys-8 is an active-site residue. 91–101 lines the ATP pocket; the sequence is PVAAGLAGGST. Asp-133 is an active-site residue.

Belongs to the GHMP kinase family. IspE subfamily.

The enzyme catalyses 4-CDP-2-C-methyl-D-erythritol + ATP = 4-CDP-2-C-methyl-D-erythritol 2-phosphate + ADP + H(+). It participates in isoprenoid biosynthesis; isopentenyl diphosphate biosynthesis via DXP pathway; isopentenyl diphosphate from 1-deoxy-D-xylulose 5-phosphate: step 3/6. Its function is as follows. Catalyzes the phosphorylation of the position 2 hydroxy group of 4-diphosphocytidyl-2C-methyl-D-erythritol. The sequence is that of 4-diphosphocytidyl-2-C-methyl-D-erythritol kinase from Clostridium botulinum (strain ATCC 19397 / Type A).